Reading from the N-terminus, the 124-residue chain is Small ribosomal subunit protein bS6 (124 aa).

The interval 96–124 (ETAPSPMMKEVQREEARKAAQTTTEGQPA) is disordered. Over residues 115 to 124 (AQTTTEGQPA) the composition is skewed to polar residues.

This sequence belongs to the bacterial ribosomal protein bS6 family.

Its function is as follows. Binds together with bS18 to 16S ribosomal RNA. The chain is Small ribosomal subunit protein bS6 from Cupriavidus metallidurans (strain ATCC 43123 / DSM 2839 / NBRC 102507 / CH34) (Ralstonia metallidurans).